The following is a 97-amino-acid chain: Co-chaperonin GroES (97 aa).

Belongs to the GroES chaperonin family. As to quaternary structure, heptamer of 7 subunits arranged in a ring. Interacts with the chaperonin GroEL.

The protein resides in the cytoplasm. Its function is as follows. Together with the chaperonin GroEL, plays an essential role in assisting protein folding. The GroEL-GroES system forms a nano-cage that allows encapsulation of the non-native substrate proteins and provides a physical environment optimized to promote and accelerate protein folding. GroES binds to the apical surface of the GroEL ring, thereby capping the opening of the GroEL channel. The sequence is that of Co-chaperonin GroES from Buchnera aphidicola subsp. Tuberolachnus salignus.